The following is a 147-amino-acid chain: Large ribosomal subunit protein uL23A (147 aa).

Low complexity predominate over residues 1–10 (MAPSAPAKTA). A disordered region spans residues 1 to 29 (MAPSAPAKTAKALDAKKKVVKGKRTTHRR). Basic residues predominate over residues 18 to 29 (KVVKGKRTTHRR).

It belongs to the universal ribosomal protein uL23 family.

This protein binds to a specific region on the 26S rRNA. This chain is Large ribosomal subunit protein uL23A, found in Caenorhabditis elegans.